We begin with the raw amino-acid sequence, 635 residues long: Threonine--tRNA ligase (635 aa).

The TGS domain occupies Met1–Asp61. The segment at Asp242–Pro532 is catalytic. The Zn(2+) site is built by Cys333, His384, and His509.

Belongs to the class-II aminoacyl-tRNA synthetase family. As to quaternary structure, homodimer. The cofactor is Zn(2+).

It localises to the cytoplasm. It carries out the reaction tRNA(Thr) + L-threonine + ATP = L-threonyl-tRNA(Thr) + AMP + diphosphate + H(+). In terms of biological role, catalyzes the attachment of threonine to tRNA(Thr) in a two-step reaction: L-threonine is first activated by ATP to form Thr-AMP and then transferred to the acceptor end of tRNA(Thr). Also edits incorrectly charged L-seryl-tRNA(Thr). This chain is Threonine--tRNA ligase, found in Syntrophomonas wolfei subsp. wolfei (strain DSM 2245B / Goettingen).